A 221-amino-acid chain; its full sequence is MERNPPDGTGPVHVPLGHIVASEKWRGSQLAQEMQGKVRLIFEEGLASADFYLSSKSCILYVTEADLVAGHGYRKRLARFRNSSHLQGIIIVEKTQMSEQYFPAVQKFTVLDLGMVLLPVASQSEASCLIIHLVQEQTREPSKNPFLRKKRSMLSELSLVQTVQQIPGVGKVKAPLLLQKFPSIQQLSNASVQELEEVVGPAAAQQIHTFFTQPKRQQPRS.

In terms of assembly, belongs to the multisubunit FA complex composed of FANCA, FANCB, FANCC, FANCE, FANCF, FANCG, FANCL/PHF9, FANCM and FAAP24. Interacts with FANCM.

Its subcellular location is the nucleus. Plays a role in DNA repair through recruitment of the FA core complex to damaged DNA. Regulates FANCD2 monoubiquitination upon DNA damage. Induces chromosomal instability as well as hypersensitivity to DNA cross-linking agents, when repressed. Targets FANCM/FAAP24 complex to the DNA, preferentially to single strand DNA. This Mus musculus (Mouse) protein is Fanconi anemia core complex-associated protein 24.